Here is a 587-residue protein sequence, read N- to C-terminus: Deoxynucleoside triphosphate triphosphohydrolase sahd-1 (587 aa).

One can recognise an HD domain in the interval 92–262 (RFVHSLGTFS…GHDVDKMDYL (171 aa)). The Zn(2+) site is built by histidine 95, histidine 134, aspartate 135, and aspartate 257. The segment at 554 to 587 (EKFLTPRKRSPQDSPDEVSSSCSTAKRRLEFGSS) is disordered. Threonine 558 bears the Phosphothreonine mark.

This sequence belongs to the SAMHD1 family. As to quaternary structure, homodimer. Homotetramer; in dGTP-bound form. The cofactor is Zn(2+).

Its subcellular location is the nucleus. The protein resides in the chromosome. The catalysed reaction is a 2'-deoxyribonucleoside 5'-triphosphate + H2O = a 2'-deoxyribonucleoside + triphosphate + H(+). With respect to regulation, allosterically activated and regulated by GTP or dGTP. Allosteric activation promotes the formation of highly active homotetramers. Phosphorylation impairs homotetramerization, thereby inhibiting dNTPase activity. In terms of biological role, has deoxynucleoside triphosphate (dNTPase) activity. dNTPase activity acts as a regulator of DNA precursor pools by regulating dNTP pools. Phosphorylation acts as a switch to control dNTPase-dependent and -independent functions. The polypeptide is Deoxynucleoside triphosphate triphosphohydrolase sahd-1 (Caenorhabditis elegans).